We begin with the raw amino-acid sequence, 577 residues long: Isocitrate dehydrogenase kinase/phosphatase (577 aa).

Residues 324 to 330 (APGIRGL) and K345 contribute to the ATP site. D380 is an active-site residue.

This sequence belongs to the AceK family.

It localises to the cytoplasm. It carries out the reaction L-seryl-[isocitrate dehydrogenase] + ATP = O-phospho-L-seryl-[isocitrate dehydrogenase] + ADP + H(+). In terms of biological role, bifunctional enzyme which can phosphorylate or dephosphorylate isocitrate dehydrogenase (IDH) on a specific serine residue. This is a regulatory mechanism which enables bacteria to bypass the Krebs cycle via the glyoxylate shunt in response to the source of carbon. When bacteria are grown on glucose, IDH is fully active and unphosphorylated, but when grown on acetate or ethanol, the activity of IDH declines drastically concomitant with its phosphorylation. This Pseudoalteromonas atlantica (strain T6c / ATCC BAA-1087) protein is Isocitrate dehydrogenase kinase/phosphatase.